We begin with the raw amino-acid sequence, 1022 residues long: Collagen alpha-2(VI) chain (1022 aa).

An N-terminal signal peptide occupies residues 1 to 27; sequence MSRRTAEMFQQAFLSTLLCVALVPLHA. Residues 28-255 form a nonhelical region region; sequence QFDDEPVTSC…CYKMTCLEIA (228 aa). Positions 44–168 constitute a VWFA 1 domain; that stretch reads PISVYFVIDT…VITDGHVTGS (125 aa). Asn-141 and Asn-215 each carry an N-linked (GlcNAc...) asparagine glycan. The tract at residues 256-590 is triple-helical region; it reads GPAGPKGYRG…PGPPGDPGLT (335 aa). The tract at residues 263 to 587 is disordered; that stretch reads YRGQKGAKGN…EGTPGPPGDP (325 aa). Positions 287–299 are enriched in low complexity; it reads DPGIEGPIGYPGP. Residues 306–318 are compositionally biased toward basic and acidic residues; the sequence is KGEKGEIGSDGRR. Asn-327 carries N-linked (GlcNAc...) asparagine glycosylation. Short sequence motifs (cell attachment site) lie at residues 348 to 350 and 366 to 368; these read RGD. Basic and acidic residues predominate over residues 363 to 377; the sequence is QGERGDEGMKGDPGR. Over residues 389–399 the composition is skewed to low complexity; it reads EKGSPGIPGNP. 5 short sequence motifs (cell attachment site) span residues 426-428, 444-446, 465-467, 489-491, and 498-500; these read RGD. The segment at 514 to 519 is interruption in collagenous region; the sequence is GFSYPG. Residues 534–543 are compositionally biased toward gly residues; it reads GPKGGRGELG. Positions 591 to 1022 are nonhelical region; the sequence is DCDVMTYVRE…FFDRFIRWIC (432 aa). VWFA domains follow at residues 613–738 and 833–957; these read ALDI…YDPR and DIVF…ITGS. N-linked (GlcNAc...) asparagine glycosylation is found at Asn-630 and Asn-897.

It belongs to the type VI collagen family. In terms of assembly, trimers composed of three different chains: alpha 1(VI), alpha 2(VI), and alpha 3(VI). Prolines at the third position of the tripeptide repeating unit (G-X-Y) are hydroxylated in some or all of the chains.

Its subcellular location is the secreted. It localises to the extracellular space. The protein localises to the extracellular matrix. Collagen VI acts as a cell-binding protein. The sequence is that of Collagen alpha-2(VI) chain (COL6A2) from Gallus gallus (Chicken).